Reading from the N-terminus, the 142-residue chain is MPRCRWLSLILLTIPLALVARKDPKKNETGVLRKLKPVNASNANVKQCLWFAMQEYNKESEDKYVFLVVKTLQAQLQVTNLLEYLIDVEIARSDCRKPLSTNEICAIQENSKLKRKLSCSFLVGALPWNGEFTVMEKKCEDA.

Positions 1–21 (MPRCRWLSLILLTIPLALVAR) are cleaved as a signal peptide. N-linked (GlcNAc...) asparagine glycans are attached at residues Asn-27 and Asn-39. The Secondary area of contact motif lies at 77–81 (QVTNL). Disulfide bonds link Cys-95/Cys-105 and Cys-119/Cys-139.

Belongs to the cystatin family. Proximal caput region of the epididymis. Lower expression in the testis. Within the testis it is localized to the elongating spermatids, whereas within the epididymis it is exclusively synthesized by the proximal caput epithelium.

The protein localises to the secreted. Functionally, performs a specialized role during sperm development and maturation. This is Cystatin-8 (CST8) from Homo sapiens (Human).